The sequence spans 353 residues: Ribosomal RNA large subunit methyltransferase M (353 aa).

S-adenosyl-L-methionine-binding positions include Ser-183, 216-219 (APGG), Asp-235, Asp-255, and Asp-271. The active-site Proton acceptor is the Lys-300.

This sequence belongs to the class I-like SAM-binding methyltransferase superfamily. RNA methyltransferase RlmE family. RlmM subfamily. In terms of assembly, monomer.

The protein localises to the cytoplasm. The enzyme catalyses cytidine(2498) in 23S rRNA + S-adenosyl-L-methionine = 2'-O-methylcytidine(2498) in 23S rRNA + S-adenosyl-L-homocysteine + H(+). Catalyzes the 2'-O-methylation at nucleotide C2498 in 23S rRNA. This is Ribosomal RNA large subunit methyltransferase M from Azotobacter vinelandii (strain DJ / ATCC BAA-1303).